A 1405-amino-acid chain; its full sequence is Tonsoku-like protein (1405 aa).

TPR repeat units lie at residues 23-56 (AVSC…YASM), 63-96 (AKAK…AKRL), 163-196 (ARCY…SKTH), 203-237 (HLCY…AKRF), 245-278 (CETL…NTPD), 314-347 (KGLY…AELN), and 355-388 (VPIY…NQDA). The LRR 1 repeat unit spans residues 153–181 (ISKLEQLDMQARCYLNIGVVKEHMEAFQE). Residues 439 to 465 (MVRLRRLMLKHNMQVLVENLEADATAK) form an LRR 2 repeat. The disordered stretch occupies residues 465–535 (KGIDLDQEES…RGNRTLVIKK (71 aa)). The segment covering 469 to 483 (LDQEESVGDDEEESD) has biased composition (acidic residues). 3 ANK repeats span residues 538–567 (KGET…TVNV), 571–600 (AGWL…ASAI), and 609–638 (DGIT…DATV). Disordered stretches follow at residues 695-753 (FNAK…KEYR), 806-827 (KRIN…DTAL), and 841-880 (TPEN…KKHQ). Phosphoserine occurs at positions 707 and 709. The segment covering 813-822 (LSRRTSKENF) has biased composition (basic and acidic residues). Polar residues predominate over residues 841 to 850 (TPENEYSQRQ). Low complexity predominate over residues 859 to 874 (SRSSSMSSNHSSSATS). A phosphoserine mark is found at S893, S895, S899, and S902. LRR repeat units lie at residues 1085–1108 (QARL…QLAK), 1113–1137 (LLQL…LLCG), 1143–1166 (LELL…ILSK), 1186–1211 (LTEL…QLTQ), 1287–1311 (AKQL…YILD), and 1333–1357 (LQKL…VFSM).

Belongs to the Tonsoku family.

The protein localises to the nucleus. It localises to the nucleoplasm. It is found in the chromosome. In terms of biological role, histone reader involved in homologous recombination-mediated repair of double-strand breaks (DSBs) at stalled or collapsed replication forks. Specifically recognizes and binds histone H3.1. The chain is Tonsoku-like protein from Drosophila melanogaster (Fruit fly).